The chain runs to 177 residues: Transcription termination/antitermination protein NusG (177 aa).

The KOW domain maps to 126-156 (PGETVRVIDGPFADFNGVVEEVNYEKSRIQV).

Belongs to the NusG family.

In terms of biological role, participates in transcription elongation, termination and antitermination. The sequence is that of Transcription termination/antitermination protein NusG from Pseudomonas aeruginosa (strain ATCC 15692 / DSM 22644 / CIP 104116 / JCM 14847 / LMG 12228 / 1C / PRS 101 / PAO1).